Reading from the N-terminus, the 490-residue chain is Pentatricopeptide repeat-containing protein At2g20710, mitochondrial (490 aa).

Residues 1–86 (MKHLLLLRLV…IKMLRKFSRF (86 aa)) constitute a mitochondrion transit peptide. PPR repeat units follow at residues 138–172 (NYHL…GFLK), 173–207 (GCLP…TVKP), 208–243 (DIFT…GLHL), 244–274 (DWRT…SEQM), 280–310 (RKHA…YKEL), 314–344 (YNTG…WEAG), 349–379 (DIRI…LVQK), and 384–421 (DTST…GWRP).

This sequence belongs to the PPR family. P subfamily.

It is found in the mitochondrion. The protein is Pentatricopeptide repeat-containing protein At2g20710, mitochondrial of Arabidopsis thaliana (Mouse-ear cress).